The sequence spans 371 residues: UDP-N-acetylglucosamine--N-acetylmuramyl-(pentapeptide) pyrophosphoryl-undecaprenol N-acetylglucosamine transferase (371 aa).

UDP-N-acetyl-alpha-D-glucosamine is bound by residues 10-12 (TGG), Asn-124, Arg-165, Ser-191, Ile-246, and Gln-291.

Belongs to the glycosyltransferase 28 family. MurG subfamily.

The protein resides in the cell inner membrane. It carries out the reaction di-trans,octa-cis-undecaprenyl diphospho-N-acetyl-alpha-D-muramoyl-L-alanyl-D-glutamyl-meso-2,6-diaminopimeloyl-D-alanyl-D-alanine + UDP-N-acetyl-alpha-D-glucosamine = di-trans,octa-cis-undecaprenyl diphospho-[N-acetyl-alpha-D-glucosaminyl-(1-&gt;4)]-N-acetyl-alpha-D-muramoyl-L-alanyl-D-glutamyl-meso-2,6-diaminopimeloyl-D-alanyl-D-alanine + UDP + H(+). It participates in cell wall biogenesis; peptidoglycan biosynthesis. Cell wall formation. Catalyzes the transfer of a GlcNAc subunit on undecaprenyl-pyrophosphoryl-MurNAc-pentapeptide (lipid intermediate I) to form undecaprenyl-pyrophosphoryl-MurNAc-(pentapeptide)GlcNAc (lipid intermediate II). The sequence is that of UDP-N-acetylglucosamine--N-acetylmuramyl-(pentapeptide) pyrophosphoryl-undecaprenol N-acetylglucosamine transferase from Geobacter sp. (strain M21).